The sequence spans 436 residues: MKGTAASALLIALSATAAQARPVVDERFPYTGPAVPIGDWVDPTINGNGKGFPRLVEPPAVKPATANPRNNVNVISLSYIPKGMHIHYQTPFGLGQLPAVRWGKDPRNLKQHGAGLLSHFQDWSSGRSPGIVQRRRAERHGLHQRSRNTQAAGQGCPMRELPFAWPTEVTISYADELGIILVPTTGRSATTAPVLLFRVAYSGRVQEALARGEIPDQGEVVANRRRNFTAYQHPFRMPGPETGGVGNFWYSFDYGLAHFVSIDGETDFANSPEWNFAEDVTGNETLPSEAETFITDSGPFGNVNGSVHETKSYEQWHLAEAGSGEGRPQQDPVGLRHEPPPYVQFRLFLYQLHVREAFEGLLLSMAWMLTSLGDVCPFFKLVHHPLTLSSATSTGTSSLSSRATAPSILPPCEQQHLLCPQRQVHHPHHQRHGRQH.

The N-terminal stretch at 1–20 (MKGTAASALLIALSATAAQA) is a signal peptide. N-linked (GlcNAc...) asparagine glycans are attached at residues Asn227, Asn283, and Asn304.

As to quaternary structure, monomer.

The catalysed reaction is a phosphate monoester + H2O = an alcohol + phosphate. The chain is Phosphate-repressible acid phosphatase (pacA) from Aspergillus niger.